A 267-amino-acid polypeptide reads, in one-letter code: Movement protein (267 aa).

It belongs to the tobamovirus movement protein family.

It is found in the host cytoplasm. Its subcellular location is the host cytoskeleton. The protein localises to the host cell junction. The protein resides in the host plasmodesma. Functionally, transports viral genome to neighboring plant cells directly through plasmosdesmata, without any budding. The movement protein allows efficient cell to cell propagation, by bypassing the host cell wall barrier. Forms a ribonucleoprotein complex with viral RNA. Binds microtubules and modulates microtubule stability. Can bind double-stranded DNA. The protein is Movement protein (MP) of Brassicaceae (TVCV).